The primary structure comprises 80 residues: Progonadoliberin-1 (80 aa).

The signal sequence occupies residues 1 to 21 (MGIKRALWWMVVCVVVLQVSA). The residue at position 22 (Q22) is a Pyrrolidone carboxylic acid. G31 bears the Glycine amide mark.

It belongs to the GnRH family.

The protein localises to the secreted. In terms of biological role, stimulates the secretion of gonadotropins. This is Progonadoliberin-1 (gnrh1) from Clarias gariepinus (North African catfish).